A 173-amino-acid chain; its full sequence is NADH-ubiquinone oxidoreductase chain 6 (173 aa).

Transmembrane regions (helical) follow at residues 1–21 (MTYV…AVAS), 25–45 (PYFG…VLIW), 53–73 (LVLF…SAAL), 82–102 (LGSW…FGIL), and 142–162 (GVLL…LELV).

The protein belongs to the complex I subunit 6 family.

It is found in the mitochondrion membrane. The enzyme catalyses a ubiquinone + NADH + 5 H(+)(in) = a ubiquinol + NAD(+) + 4 H(+)(out). Its function is as follows. Core subunit of the mitochondrial membrane respiratory chain NADH dehydrogenase (Complex I) that is believed to belong to the minimal assembly required for catalysis. Complex I functions in the transfer of electrons from NADH to the respiratory chain. The immediate electron acceptor for the enzyme is believed to be ubiquinone. The sequence is that of NADH-ubiquinone oxidoreductase chain 6 (MT-ND6) from Tetraodon nigroviridis (Spotted green pufferfish).